Reading from the N-terminus, the 266-residue chain is Glucosamine-6-phosphate deaminase (266 aa).

The Proton acceptor; for enolization step role is filled by Asp72. Asp141 acts as the For ring-opening step in catalysis. His143 functions as the Proton acceptor; for ring-opening step in the catalytic mechanism. Catalysis depends on Glu148, which acts as the For ring-opening step.

The protein belongs to the glucosamine/galactosamine-6-phosphate isomerase family. NagB subfamily. As to quaternary structure, homohexamer.

The catalysed reaction is alpha-D-glucosamine 6-phosphate + H2O = beta-D-fructose 6-phosphate + NH4(+). It participates in amino-sugar metabolism; N-acetylneuraminate degradation; D-fructose 6-phosphate from N-acetylneuraminate: step 5/5. Allosterically activated by N-acetylglucosamine 6-phosphate (GlcNAc6P). In terms of biological role, catalyzes the reversible isomerization-deamination of glucosamine 6-phosphate (GlcN6P) to form fructose 6-phosphate (Fru6P) and ammonium ion. This Aeromonas hydrophila subsp. hydrophila (strain ATCC 7966 / DSM 30187 / BCRC 13018 / CCUG 14551 / JCM 1027 / KCTC 2358 / NCIMB 9240 / NCTC 8049) protein is Glucosamine-6-phosphate deaminase.